Here is a 127-residue protein sequence, read N- to C-terminus: Glycine cleavage system H protein (127 aa).

A Lipoyl-binding domain is found at 24–106 (TATLGISAFA…YGEGWLVKVQ (83 aa)). Position 65 is an N6-lipoyllysine (lysine 65).

It belongs to the GcvH family. The glycine cleavage system is composed of four proteins: P, T, L and H. The cofactor is (R)-lipoate.

Its function is as follows. The glycine cleavage system catalyzes the degradation of glycine. The H protein shuttles the methylamine group of glycine from the P protein to the T protein. The chain is Glycine cleavage system H protein from Thermosynechococcus vestitus (strain NIES-2133 / IAM M-273 / BP-1).